Here is a 488-residue protein sequence, read N- to C-terminus: Probable cytosol aminopeptidase (488 aa).

Mn(2+) contacts are provided by lysine 254 and aspartate 259. The active site involves lysine 266. The Mn(2+) site is built by aspartate 277, aspartate 336, and glutamate 338. The active site involves arginine 340.

The protein belongs to the peptidase M17 family. Mn(2+) serves as cofactor.

The protein resides in the cytoplasm. The enzyme catalyses Release of an N-terminal amino acid, Xaa-|-Yaa-, in which Xaa is preferably Leu, but may be other amino acids including Pro although not Arg or Lys, and Yaa may be Pro. Amino acid amides and methyl esters are also readily hydrolyzed, but rates on arylamides are exceedingly low.. It carries out the reaction Release of an N-terminal amino acid, preferentially leucine, but not glutamic or aspartic acids.. Functionally, presumably involved in the processing and regular turnover of intracellular proteins. Catalyzes the removal of unsubstituted N-terminal amino acids from various peptides. The chain is Probable cytosol aminopeptidase from Roseiflexus castenholzii (strain DSM 13941 / HLO8).